Reading from the N-terminus, the 219-residue chain is Protein OPG170 (219 aa).

Residues 1–16 (MYSLVFVILMCIPFSF) form the signal peptide. Asn70 is a glycosylation site (N-linked (GlcNAc...) asparagine; by host).

Belongs to the orthopoxvirus OPG170 family.

It localises to the secreted. Its function is as follows. May interact with several cellular chemokines to interfere with chemokine-glycosaminoglycan (GAG) interactions at the cell surface to alter chemotaxis of nearby responsive cells. In Bos taurus (Bovine), this protein is Protein OPG170 (OPG170).